A 435-amino-acid polypeptide reads, in one-letter code: Glutamate-1-semialdehyde 2,1-aminomutase (435 aa).

An N6-(pyridoxal phosphate)lysine modification is found at Lys-266.

This sequence belongs to the class-III pyridoxal-phosphate-dependent aminotransferase family. HemL subfamily. Homodimer. Pyridoxal 5'-phosphate is required as a cofactor.

It localises to the cytoplasm. It carries out the reaction (S)-4-amino-5-oxopentanoate = 5-aminolevulinate. It participates in porphyrin-containing compound metabolism; protoporphyrin-IX biosynthesis; 5-aminolevulinate from L-glutamyl-tRNA(Glu): step 2/2. The chain is Glutamate-1-semialdehyde 2,1-aminomutase from Coxiella burnetii (strain Dugway 5J108-111).